Consider the following 274-residue polypeptide: Bis(5'-nucleosyl)-tetraphosphatase, symmetrical (274 aa).

Belongs to the Ap4A hydrolase family.

It carries out the reaction P(1),P(4)-bis(5'-adenosyl) tetraphosphate + H2O = 2 ADP + 2 H(+). Its function is as follows. Hydrolyzes diadenosine 5',5'''-P1,P4-tetraphosphate to yield ADP. The sequence is that of Bis(5'-nucleosyl)-tetraphosphatase, symmetrical from Shewanella sediminis (strain HAW-EB3).